The following is a 486-amino-acid chain: Glutamyl-tRNA(Gln) amidotransferase subunit A (486 aa).

Active-site charge relay system residues include lysine 76 and serine 151. Serine 175 acts as the Acyl-ester intermediate in catalysis.

This sequence belongs to the amidase family. GatA subfamily. In terms of assembly, heterotrimer of A, B and C subunits.

The enzyme catalyses L-glutamyl-tRNA(Gln) + L-glutamine + ATP + H2O = L-glutaminyl-tRNA(Gln) + L-glutamate + ADP + phosphate + H(+). Its function is as follows. Allows the formation of correctly charged Gln-tRNA(Gln) through the transamidation of misacylated Glu-tRNA(Gln) in organisms which lack glutaminyl-tRNA synthetase. The reaction takes place in the presence of glutamine and ATP through an activated gamma-phospho-Glu-tRNA(Gln). This chain is Glutamyl-tRNA(Gln) amidotransferase subunit A, found in Marinomonas sp. (strain MWYL1).